A 487-amino-acid polypeptide reads, in one-letter code: UDP-N-acetylmuramate--L-alanine ligase (487 aa).

Residue 122–128 (GTHGKTS) participates in ATP binding.

Belongs to the MurCDEF family.

The protein localises to the cytoplasm. The catalysed reaction is UDP-N-acetyl-alpha-D-muramate + L-alanine + ATP = UDP-N-acetyl-alpha-D-muramoyl-L-alanine + ADP + phosphate + H(+). The protein operates within cell wall biogenesis; peptidoglycan biosynthesis. Functionally, cell wall formation. The polypeptide is UDP-N-acetylmuramate--L-alanine ligase (Corynebacterium urealyticum (strain ATCC 43042 / DSM 7109)).